The sequence spans 190 residues: Peptidyl-tRNA hydrolase (190 aa).

Phenylalanine 14 is a tRNA binding site. The active-site Proton acceptor is the histidine 19. Positions 64, 66, and 112 each coordinate tRNA.

It belongs to the PTH family. In terms of assembly, monomer.

It localises to the cytoplasm. The enzyme catalyses an N-acyl-L-alpha-aminoacyl-tRNA + H2O = an N-acyl-L-amino acid + a tRNA + H(+). Functionally, hydrolyzes ribosome-free peptidyl-tRNAs (with 1 or more amino acids incorporated), which drop off the ribosome during protein synthesis, or as a result of ribosome stalling. Catalyzes the release of premature peptidyl moieties from peptidyl-tRNA molecules trapped in stalled 50S ribosomal subunits, and thus maintains levels of free tRNAs and 50S ribosomes. The sequence is that of Peptidyl-tRNA hydrolase from Staphylococcus aureus (strain bovine RF122 / ET3-1).